The primary structure comprises 406 residues: Oligouridylate-binding protein 1 (406 aa).

RRM domains are found at residues 49-123 and 134-212; these read RSVY…WAYA and YNIF…WAAK. The segment at 231–250 is disordered; the sequence is TSGTSDDGQEKVVNEDAPEN. Positions 255-329 constitute an RRM 3 domain; sequence TTVYVGNLAP…KPVKCSWGSK (75 aa).

Its subcellular location is the nucleus. In terms of biological role, heterogeneous nuclear ribonucleoprotein (hnRNP)-like protein that acts as a component of the pre-mRNA processing machinery. Functions to facilitate the nuclear maturation of plant pre-mRNAs. Binds with high affinity to RNA molecules that contain AU-rich regions. May bind to the 3'-UTR and protects the mRNA against exonucleolytic degradation. Associates with nuclear poly(A)+ RNA in nucleus in vivo. Does not stimulate transcription or the 3' end cleavage/polyadenylation reaction. The protein is Oligouridylate-binding protein 1 (UBP1) of Nicotiana plumbaginifolia (Leadwort-leaved tobacco).